The primary structure comprises 100 residues: Small ribosomal subunit protein bS20 (100 aa).

A compositionally biased stretch (basic residues) spans 1–20 (MASGKPKKKNPRLASGRKRV). The disordered stretch occupies residues 1–21 (MASGKPKKKNPRLASGRKRVR).

The protein belongs to the bacterial ribosomal protein bS20 family.

Its function is as follows. Binds directly to 16S ribosomal RNA. In Albidiferax ferrireducens (strain ATCC BAA-621 / DSM 15236 / T118) (Rhodoferax ferrireducens), this protein is Small ribosomal subunit protein bS20.